A 396-amino-acid chain; its full sequence is Elongation factor Tu (396 aa).

Residues 10-206 (KPHVNVGTIG…ALDSYIPDPE (197 aa)) form the tr-type G domain. The interval 19–26 (GHVDHGKT) is G1. 19 to 26 (GHVDHGKT) is a binding site for GTP. Residue threonine 26 coordinates Mg(2+). The G2 stretch occupies residues 60–64 (GITIN). Residues 81–84 (DCPG) form a G3 region. GTP contacts are provided by residues 81 to 85 (DCPGH) and 136 to 139 (NKCD). The segment at 136 to 139 (NKCD) is G4. The interval 174-176 (SAL) is G5.

Belongs to the TRAFAC class translation factor GTPase superfamily. Classic translation factor GTPase family. EF-Tu/EF-1A subfamily. In terms of assembly, monomer.

The protein localises to the cytoplasm. The catalysed reaction is GTP + H2O = GDP + phosphate + H(+). Functionally, GTP hydrolase that promotes the GTP-dependent binding of aminoacyl-tRNA to the A-site of ribosomes during protein biosynthesis. The sequence is that of Elongation factor Tu from Dechloromonas aromatica (strain RCB).